Consider the following 106-residue polypeptide: Probable NADP-dependent dehydrogenase in aabA 3'region (106 aa).

4 to 28 serves as a coordination point for NADP(+); the sequence is LITGASSGFGWEAAKLCVAKGHRVI.

It belongs to the short-chain dehydrogenases/reductases (SDR) family.

This is Probable NADP-dependent dehydrogenase in aabA 3'region from Dichelobacter nodosus (Bacteroides nodosus).